The following is a 303-amino-acid chain: MYYGFDIGGTKIALGVFDSTRRLQWEKRVPTPHTSYSAFLDAVCELVAEADQRLGVKGSVGIGIPGMPETEDGTLYAANVPAASGKPLRADLSARLDRDVRLDNDANCFALSEAWDDEFTQYPLVMGLILGTGVGGGLVLNGKPITGQSYITGEFGHMRLPVDALTLMGFDFPLRRCGCGQMGCIENYLSGRGFAWLYQHYYDQSLQAPEIIALWEQGDEQAHAHVERYLDLLAVCLGNILTIVDPDLLVIGGGLSNFTAITTQLAERLPRHLLPVARAPRIERARHGDAGGMRGAAFLHLTD.

ATP is bound by residues 4-11 (GFDIGGTK) and 133-140 (GVGGGLVL). Zn(2+)-binding residues include His157, Cys177, Cys179, and Cys184.

The protein belongs to the ROK (NagC/XylR) family. NagK subfamily.

The enzyme catalyses N-acetyl-D-glucosamine + ATP = N-acetyl-D-glucosamine 6-phosphate + ADP + H(+). It participates in cell wall biogenesis; peptidoglycan recycling. Its function is as follows. Catalyzes the phosphorylation of N-acetyl-D-glucosamine (GlcNAc) derived from cell-wall degradation, yielding GlcNAc-6-P. This chain is N-acetyl-D-glucosamine kinase, found in Salmonella gallinarum (strain 287/91 / NCTC 13346).